Reading from the N-terminus, the 125-residue chain is Small ribosomal subunit protein uS12 (125 aa).

Residues 1-31 form a disordered region; it reads MPTINQLVRQGREVETTKSKSPAMQNSPQRR. Positions 19–29 are enriched in polar residues; sequence SKSPAMQNSPQ. Residue D89 is modified to 3-methylthioaspartic acid.

Belongs to the universal ribosomal protein uS12 family. In terms of assembly, part of the 30S ribosomal subunit. Contacts proteins S8 and S17. May interact with IF1 in the 30S initiation complex.

With S4 and S5 plays an important role in translational accuracy. Its function is as follows. Interacts with and stabilizes bases of the 16S rRNA that are involved in tRNA selection in the A site and with the mRNA backbone. Located at the interface of the 30S and 50S subunits, it traverses the body of the 30S subunit contacting proteins on the other side and probably holding the rRNA structure together. The combined cluster of proteins S8, S12 and S17 appears to hold together the shoulder and platform of the 30S subunit. The polypeptide is Small ribosomal subunit protein uS12 (Paracidovorax citrulli (strain AAC00-1) (Acidovorax citrulli)).